A 392-amino-acid polypeptide reads, in one-letter code: ESX-1 secretion-associated protein EspA (392 aa).

The segment at 302 to 392 (TRQALRPRAD…GQKVLVRNVV (91 aa)) is disordered. The span at 334 to 344 (QGMGGPVGMGG) shows a compositional bias: gly residues.

In terms of assembly, homodimer; disulfide-linked. An artificial EsxB-EsxA heterodimer interacts with EspA.

The protein localises to the secreted. Its function is as follows. Required for secretion of EsxA (ESAT-6) and EsxB (CFP-10) and for virulence. Involved in translocation of bacteria from the host (human) phagolysosome to the host cytoplasm. This Mycobacterium tuberculosis (strain ATCC 25618 / H37Rv) protein is ESX-1 secretion-associated protein EspA.